We begin with the raw amino-acid sequence, 199 residues long: Probable molybdenum cofactor guanylyltransferase (199 aa).

Residues 8 to 10 (LAG), K20, D65, and D96 contribute to the GTP site. Residue D96 participates in Mg(2+) binding.

The protein belongs to the MobA family. Mg(2+) is required as a cofactor.

The protein resides in the cytoplasm. It catalyses the reaction Mo-molybdopterin + GTP + H(+) = Mo-molybdopterin guanine dinucleotide + diphosphate. Transfers a GMP moiety from GTP to Mo-molybdopterin (Mo-MPT) cofactor (Moco or molybdenum cofactor) to form Mo-molybdopterin guanine dinucleotide (Mo-MGD) cofactor. The protein is Probable molybdenum cofactor guanylyltransferase of Bacillus subtilis (strain 168).